The chain runs to 143 residues: Meiotically up-regulated gene 128 protein (143 aa).

Its function is as follows. Has a role in meiosis. This Schizosaccharomyces pombe (strain 972 / ATCC 24843) (Fission yeast) protein is Meiotically up-regulated gene 128 protein (mug128).